Reading from the N-terminus, the 139-residue chain is ATP synthase epsilon chain (139 aa).

The protein belongs to the ATPase epsilon chain family. In terms of assembly, F-type ATPases have 2 components, CF(1) - the catalytic core - and CF(0) - the membrane proton channel. CF(1) has five subunits: alpha(3), beta(3), gamma(1), delta(1), epsilon(1). CF(0) has three main subunits: a, b and c.

Its subcellular location is the cell membrane. Produces ATP from ADP in the presence of a proton gradient across the membrane. The sequence is that of ATP synthase epsilon chain from Ligilactobacillus salivarius (strain UCC118) (Lactobacillus salivarius).